The primary structure comprises 318 residues: MKPNVVSADVLFEEFRNLLKWEWVAGLGASERRFAEVAVRAARSGADLVGYLNYIHPYRAQVLGEREIAYLTNATPEDCKRRIARIVTLEPPVLVLADGQAAPDEVVSMCERAQIPMFSTQESAAFVIDVLRAYLSKHFADRTTMHGVFMDILGLGVLITGESGLGKSELGLELITRGNGLVADDAVDLYRINQTTIEGKCPELLQNLLEVRGIGLLDIRAIFGETAVRRRMRLKLIVHLVRKETLERDYERLPYEPLTQDVLGVPVLKVVIQVVAGRNIAVLVEAAVRNTILQLRGIDTYQEFVERHRRAMERGGAS.

Catalysis depends on residues H146 and K167. 161–168 (GESGLGKS) contacts ATP. Mg(2+) is bound at residue S168. D185 acts as the Proton acceptor; for phosphorylation activity. Proton donor; for dephosphorylation activity in catalysis. The important for the catalytic mechanism of both phosphorylation and dephosphorylation stretch occupies residues 209–218 (LEVRGIGLLD). E210 is a Mg(2+) binding site. R252 is a catalytic residue. The important for the catalytic mechanism of dephosphorylation stretch occupies residues 273-278 (QVVAGR).

The protein belongs to the HPrK/P family. Homohexamer. Mg(2+) serves as cofactor.

It carries out the reaction [HPr protein]-L-serine + ATP = [HPr protein]-O-phospho-L-serine + ADP + H(+). It catalyses the reaction [HPr protein]-O-phospho-L-serine + phosphate + H(+) = [HPr protein]-L-serine + diphosphate. Functionally, catalyzes the ATP- as well as the pyrophosphate-dependent phosphorylation of a specific serine residue in HPr, a phosphocarrier protein of the phosphoenolpyruvate-dependent sugar phosphotransferase system (PTS). HprK/P also catalyzes the pyrophosphate-producing, inorganic phosphate-dependent dephosphorylation (phosphorolysis) of seryl-phosphorylated HPr (P-Ser-HPr). This chain is HPr kinase/phosphorylase, found in Acidovorax sp. (strain JS42).